Reading from the N-terminus, the 727-residue chain is 1,4-alpha-glucan branching enzyme GlgB (727 aa).

Asp-405 functions as the Nucleophile in the catalytic mechanism. The active-site Proton donor is the Glu-458.

It belongs to the glycosyl hydrolase 13 family. GlgB subfamily. In terms of assembly, monomer.

The enzyme catalyses Transfers a segment of a (1-&gt;4)-alpha-D-glucan chain to a primary hydroxy group in a similar glucan chain.. It participates in glycan biosynthesis; glycogen biosynthesis. Its function is as follows. Catalyzes the formation of the alpha-1,6-glucosidic linkages in glycogen by scission of a 1,4-alpha-linked oligosaccharide from growing alpha-1,4-glucan chains and the subsequent attachment of the oligosaccharide to the alpha-1,6 position. The sequence is that of 1,4-alpha-glucan branching enzyme GlgB from Yersinia pestis bv. Antiqua (strain Antiqua).